The chain runs to 198 residues: Proteasome subunit beta 2 (198 aa).

The propeptide at Met-1 to Ala-4 is removed in mature form; by autocatalysis. Thr-5 serves as the catalytic Nucleophile.

It belongs to the peptidase T1B family. The 20S proteasome core is composed of 14 alpha and 14 beta subunits that assemble into four stacked heptameric rings, resulting in a barrel-shaped structure. The two inner rings, each composed of seven catalytic beta subunits, are sandwiched by two outer rings, each composed of seven alpha subunits. The catalytic chamber with the active sites is on the inside of the barrel. Has a gated structure, the ends of the cylinder being occluded by the N-termini of the alpha-subunits. Is capped at one or both ends by the proteasome regulatory ATPase, PAN.

It is found in the cytoplasm. It carries out the reaction Cleavage of peptide bonds with very broad specificity.. With respect to regulation, the formation of the proteasomal ATPase PAN-20S proteasome complex, via the docking of the C-termini of PAN into the intersubunit pockets in the alpha-rings, triggers opening of the gate for substrate entry. Interconversion between the open-gate and close-gate conformations leads to a dynamic regulation of the 20S proteasome proteolysis activity. Its function is as follows. Component of the proteasome core, a large protease complex with broad specificity involved in protein degradation. The polypeptide is Proteasome subunit beta 2 (Korarchaeum cryptofilum (strain OPF8)).